The sequence spans 400 residues: Queuine tRNA-ribosyltransferase catalytic subunit (400 aa).

The Proton acceptor role is filled by Asp89. Residues 89–93, Asp143, Gln185, and Gly212 each bind substrate; that span reads DSGGF. The interval 243–249 is RNA binding; it reads GVGFPVD. Asp262 acts as the Nucleophile in catalysis. The segment at 267–271 is RNA binding; important for wobble base 34 recognition; the sequence is TRTAR. Zn(2+) is bound by residues Cys301, Cys303, Cys306, and His331.

It belongs to the queuine tRNA-ribosyltransferase family. As to quaternary structure, heterodimer of a catalytic subunit and an accessory subunit. Requires Zn(2+) as cofactor.

Its subcellular location is the cytoplasm. It catalyses the reaction guanosine(34) in tRNA + queuine = queuosine(34) in tRNA + guanine. Functionally, catalytic subunit of the queuine tRNA-ribosyltransferase (TGT) that catalyzes the base-exchange of a guanine (G) residue with queuine (Q) at position 34 (anticodon wobble position) in tRNAs with GU(N) anticodons (tRNA-Asp, -Asn, -His and -Tyr), resulting in the hypermodified nucleoside queuosine (7-(((4,5-cis-dihydroxy-2-cyclopenten-1-yl)amino)methyl)-7-deazaguanosine). Catalysis occurs through a double-displacement mechanism. The nucleophile active site attacks the C1' of nucleotide 34 to detach the guanine base from the RNA, forming a covalent enzyme-RNA intermediate. The proton acceptor active site deprotonates the incoming queuine, allowing a nucleophilic attack on the C1' of the ribose to form the product. The polypeptide is Queuine tRNA-ribosyltransferase catalytic subunit (Caenorhabditis briggsae).